The following is a 300-amino-acid chain: Actin-related protein 2/3 complex subunit 2-A (300 aa).

This sequence belongs to the ARPC2 family. In terms of assembly, component of the Arp2/3 complex composed of actr2/arp2, actr3/arp3, arpc1 (arpc1a or arpc1b), arpc2, arpc3, arpc4 and arpc5.

It is found in the cytoplasm. The protein localises to the cytoskeleton. The protein resides in the cell projection. It localises to the nucleus. Its function is as follows. Actin-binding component of the Arp2/3 complex, a multiprotein complex that mediates actin polymerization upon stimulation by nucleation-promoting factor (NPF). The Arp2/3 complex mediates the formation of branched actin networks in the cytoplasm, providing the force for cell motility. In addition to its role in the cytoplasmic cytoskeleton, the Arp2/3 complex also promotes actin polymerization in the nucleus, thereby regulating gene transcription and repair of damaged DNA. The Arp2/3 complex promotes homologous recombination (HR) repair in response to DNA damage by promoting nuclear actin polymerization, leading to drive motility of double-strand breaks (DSBs). The sequence is that of Actin-related protein 2/3 complex subunit 2-A (arpc2-a) from Xenopus laevis (African clawed frog).